The chain runs to 375 residues: 23S rRNA (uracil(747)-C(5))-methyltransferase RlmC (375 aa).

The [4Fe-4S] cluster site is built by C3, C11, C14, and C87. Positions 212, 241, 262, and 307 each coordinate S-adenosyl-L-methionine. Residue C334 is the Nucleophile of the active site.

The protein belongs to the class I-like SAM-binding methyltransferase superfamily. RNA M5U methyltransferase family. RlmC subfamily.

The enzyme catalyses uridine(747) in 23S rRNA + S-adenosyl-L-methionine = 5-methyluridine(747) in 23S rRNA + S-adenosyl-L-homocysteine + H(+). Functionally, catalyzes the formation of 5-methyl-uridine at position 747 (m5U747) in 23S rRNA. In Escherichia coli O17:K52:H18 (strain UMN026 / ExPEC), this protein is 23S rRNA (uracil(747)-C(5))-methyltransferase RlmC.